Reading from the N-terminus, the 245-residue chain is tRNA pseudouridine synthase A (245 aa).

Asp52 serves as the catalytic Nucleophile. Tyr110 is a substrate binding site.

It belongs to the tRNA pseudouridine synthase TruA family. As to quaternary structure, homodimer.

It carries out the reaction uridine(38/39/40) in tRNA = pseudouridine(38/39/40) in tRNA. Functionally, formation of pseudouridine at positions 38, 39 and 40 in the anticodon stem and loop of transfer RNAs. This chain is tRNA pseudouridine synthase A, found in Pseudothermotoga lettingae (strain ATCC BAA-301 / DSM 14385 / NBRC 107922 / TMO) (Thermotoga lettingae).